A 397-amino-acid polypeptide reads, in one-letter code: Growth-regulating factor 5 (397 aa).

Residues 16–51 (PFTPTQWEELEHQALIYKYMVSGVPVPPELIFSIRR) form the QLQ domain. 2 consecutive short sequence motifs (bipartite nuclear localization signal) follow at residues 78–96 (RKPD…KKWR) and 114–121 (RGRNRARK). The WRC domain maps to 81-125 (DPEPGRCRRTDGKKWRCSREAYPDSKYCEKHMHRGRNRARKSLDQ). Disordered regions lie at residues 108-172 (CEKH…SMDA), 197-217 (LDYP…HHAS), 288-320 (PYHH…DHDH), and 340-397 (VLAN…DTGS). The span at 111 to 120 (HMHRGRNRAR) shows a compositional bias: basic residues. Low complexity predominate over residues 128 to 172 (TTTTPLTSPSLSFTNNNNPSPTLSSSSSSNSSSTTYSASSSSMDA). The span at 288-298 (PYHHCSTDHNK) shows a compositional bias: basic and acidic residues.

It belongs to the GRF family. As to quaternary structure, interacts with GIF1. In terms of tissue distribution, strongly expressed in actively growing and developing tissues, such as roots, upper stems, and shoot tips containing the shoot apical meristem (SAM) and flower buds. Also expressed in mature flowers, but weakly expressed in mature stems and leaves.

The protein localises to the nucleus. Functionally, transcription activator that plays a role in the regulation of cell expansion in leaf and cotyledons tissues. Acts together with GIF1 for the development of appropriate leaf size and shape through the promotion and/or maintenance of cell proliferation activity in leaf primordia. The chain is Growth-regulating factor 5 (GRF5) from Arabidopsis thaliana (Mouse-ear cress).